Reading from the N-terminus, the 701-residue chain is Elongation factor G (701 aa).

The 283-residue stretch at 8–290 folds into the tr-type G domain; that stretch reads SLYRNIGISA…AVVELLPAPT (283 aa). Residues 17 to 24, 88 to 92, and 142 to 145 each bind GTP; these read AHIDAGKT, DTPGH, and NKMD.

The protein belongs to the TRAFAC class translation factor GTPase superfamily. Classic translation factor GTPase family. EF-G/EF-2 subfamily.

The protein resides in the cytoplasm. In terms of biological role, catalyzes the GTP-dependent ribosomal translocation step during translation elongation. During this step, the ribosome changes from the pre-translocational (PRE) to the post-translocational (POST) state as the newly formed A-site-bound peptidyl-tRNA and P-site-bound deacylated tRNA move to the P and E sites, respectively. Catalyzes the coordinated movement of the two tRNA molecules, the mRNA and conformational changes in the ribosome. This chain is Elongation factor G, found in Neisseria gonorrhoeae (strain ATCC 700825 / FA 1090).